The following is a 1311-amino-acid chain: Clustered mitochondria protein homolog (1311 aa).

Positions 1–18 (MAEKTNGAAAPNGAADAP) are enriched in low complexity. The interval 1-27 (MAEKTNGAAAPNGAADAPKSSPEQAQD) is disordered. Residues 324-568 (DITRTQESFL…RITPLDVSWQ (245 aa)) form the Clu domain. Residues 491-525 (IDYGAVDGKDLVATDERFVPQFQKLSKALKVKPHA) form a TPR 1 repeat. Residues 606–630 (SEVAKRGQAKKDQAAVEEKKEAKAE) are compositionally biased toward basic and acidic residues. Disordered stretches follow at residues 606-694 (SEVA…SSDR) and 925-966 (PAPV…SSTI). The span at 631–661 (SEEDSDSSSEEESSSDESDSEESSSDEDEEE) shows a compositional bias: acidic residues. Residues 665–675 (PKKKSVPKKAA) show a composition bias toward basic residues. A compositionally biased stretch (basic and acidic residues) spans 676 to 694 (KKEEVKEEKKDEKEASSDR). TPR repeat units lie at residues 1034-1067 (ARVY…AERT), 1076-1109 (LLDY…WKII), and 1118-1151 (ITTI…CEVV). Over residues 1276–1286 (LKFIEGTDKQK) the composition is skewed to basic and acidic residues. Residues 1276 to 1311 (LKFIEGTDKQKKPAAKKRTGRANPKRRGAEPVSTKA) form a disordered region. Basic residues predominate over residues 1287-1301 (KPAAKKRTGRANPKR).

It belongs to the CLU family. May associate with the eukaryotic translation initiation factor 3 (eIF-3) complex.

Its subcellular location is the cytoplasm. In terms of biological role, mRNA-binding protein involved in proper cytoplasmic distribution of mitochondria. The chain is Clustered mitochondria protein homolog from Pyricularia oryzae (strain 70-15 / ATCC MYA-4617 / FGSC 8958) (Rice blast fungus).